Here is a 948-residue protein sequence, read N- to C-terminus: Non-lysosomal glucosylceramidase (948 aa).

Residues 1-736 (MAEPLAVETK…VMDGPSAYCS (736 aa)) are Extracellular-facing. Positions 177–195 (STRDKTSDPDGDPDGERTK) are enriched in basic and acidic residues. The tract at residues 177-197 (STRDKTSDPDGDPDGERTKCQ) is disordered. N200 carries N-linked (GlcNAc...) asparagine glycosylation. Residue S214 is modified to Phosphoserine. N288, N555, and N629 each carry an N-linked (GlcNAc...) asparagine glycan. A phosphoserine mark is found at S667 and S669. N673 is a glycosylation site (N-linked (GlcNAc...) asparagine). The chain crosses the membrane as a helical span at residues 737–753 (GLWLAALQAMSAMATIL). The Cytoplasmic segment spans residues 754 to 948 (DQPNDCLRYQ…ALERRRAQRD (195 aa)).

The protein belongs to the non-lysosomal glucosylceramidase family.

It is found in the cell membrane. The enzyme catalyses a beta-D-glucosyl-(1&lt;-&gt;1')-N-acylsphing-4-enine + H2O = an N-acylsphing-4-enine + D-glucose. Its function is as follows. Non-lysosomal glucosylceramidase that catalyzes the conversion of glucosylceramide to free glucose and ceramide. This chain is Non-lysosomal glucosylceramidase, found in Drosophila melanogaster (Fruit fly).